Consider the following 292-residue polypeptide: Recombination-promoting nuclease RpnA (292 aa).

The protein belongs to the Rpn/YhgA-like nuclease family. It depends on Mg(2+) as a cofactor.

Inhibited by EDTA, Zn(2+) and by Mg(2+) plus Mn(2+); stimulated by Ca(2+) in the presence of Mg(2+). Functionally, a low activity DNA endonuclease yielding 3'-hydroxyl ends, equally active on ss or dsDNA, not active on dsRNA. Shows no sequence specificity. Upon expression enhances RecA-independent DNA recombination 49-fold, concomitantly reducing viability by 88% and probably inducing DNA damage as measured by induction of the SOS repair response in RecA cells. RecA-independent DNA recombination leads to replacement of recipient genes with large segments of donor DNA rather than DNA addition to the donor strain; increased expression of RpnA leads to smaller replacement segments, suggesting this protein may play a role in generating crossover events. The protein is Recombination-promoting nuclease RpnA of Escherichia coli (strain K12).